A 75-amino-acid polypeptide reads, in one-letter code: Small ribosomal subunit protein bS16 (75 aa).

It belongs to the bacterial ribosomal protein bS16 family.

This is Small ribosomal subunit protein bS16 from Campylobacter jejuni subsp. jejuni serotype O:23/36 (strain 81-176).